The following is a 258-amino-acid chain: Regulatory protein RecX (258 aa).

The protein belongs to the RecX family.

It localises to the cytoplasm. Its function is as follows. Modulates RecA activity. The sequence is that of Regulatory protein RecX from Streptococcus pneumoniae (strain 70585).